A 149-amino-acid polypeptide reads, in one-letter code: Calmodulin (149 aa).

N-acetylalanine is present on A2. EF-hand domains lie at 8-43 (EQIAEFKEAFSLFDKDGDGTITTKELGTVMRSLGQN), 44-79 (PTEAELQDMINEVDADGNGTIDFPEFLTMMARKMKD), 81-116 (DSEEEIIEAFKVFDKDGNGFISAAELRHIMTNLGEK), and 117-149 (LTDEEVDEMIREADIDGDGQINYEEFVKMMMAK). The Ca(2+) site is built by D21, D23, D25, T27, E32, D57, D59, N61, T63, E68, D94, D96, N98, and E105. K116 bears the N6,N6,N6-trimethyllysine mark. Residues D130, D132, D134, Q136, and E141 each contribute to the Ca(2+) site.

Belongs to the calmodulin family.

Calmodulin mediates the control of a large number of enzymes, ion channels and other proteins by Ca(2+). Among the enzymes to be stimulated by the calmodulin-Ca(2+) complex are a number of protein kinases and phosphatases. This Macrocystis pyrifera (Giant kelp) protein is Calmodulin.